A 245-amino-acid chain; its full sequence is Fibroblast growth factor 3 (245 aa).

The signal sequence occupies residues 1-17; the sequence is MGLIWLLLLSLLEPSWP. Asparagine 65 is a glycosylation site (N-linked (GlcNAc...) asparagine). Disordered stretches follow at residues 137–181 and 195–245; these read GSSG…FLPR and QSSQ…LAVA. Residues 161-173 show a composition bias toward basic residues; sequence GRPRRGFKTRRTQ. Positions 226-238 are enriched in polar residues; that stretch reads TLSTRATPSTQLH.

Belongs to the heparin-binding growth factors family. As to quaternary structure, interacts with FGFR1 and FGFR2. Affinity between fibroblast growth factors (FGFs) and their receptors is increased by heparan sulfate glycosaminoglycans that function as coreceptors. In terms of processing, glycosylated.

Its subcellular location is the nucleus. It is found in the endoplasmic reticulum. It localises to the golgi apparatus. Plays an important role in the regulation of embryonic development, cell proliferation, and cell differentiation. Required for normal ear development. This Mus musculus (Mouse) protein is Fibroblast growth factor 3 (Fgf3).